The sequence spans 201 residues: Ribosome maturation factor RimP (201 aa).

This sequence belongs to the RimP family.

It is found in the cytoplasm. Its function is as follows. Required for maturation of 30S ribosomal subunits. This Rhizobium johnstonii (strain DSM 114642 / LMG 32736 / 3841) (Rhizobium leguminosarum bv. viciae) protein is Ribosome maturation factor RimP.